Here is an 89-residue protein sequence, read N- to C-terminus: Small ribosomal subunit protein bS20 (89 aa).

Belongs to the bacterial ribosomal protein bS20 family.

Binds directly to 16S ribosomal RNA. The chain is Small ribosomal subunit protein bS20 from Helicobacter pylori (strain P12).